The sequence spans 103 residues: Large ribosomal subunit protein uL24 (103 aa).

Belongs to the universal ribosomal protein uL24 family. As to quaternary structure, part of the 50S ribosomal subunit.

Functionally, one of two assembly initiator proteins, it binds directly to the 5'-end of the 23S rRNA, where it nucleates assembly of the 50S subunit. In terms of biological role, one of the proteins that surrounds the polypeptide exit tunnel on the outside of the subunit. The protein is Large ribosomal subunit protein uL24 of Latilactobacillus sakei subsp. sakei (strain 23K) (Lactobacillus sakei subsp. sakei).